We begin with the raw amino-acid sequence, 457 residues long: ATP synthase subunit beta (457 aa).

Position 147 to 154 (147 to 154 (GGAGVGKT)) interacts with ATP.

It belongs to the ATPase alpha/beta chains family. As to quaternary structure, F-type ATPases have 2 components, CF(1) - the catalytic core - and CF(0) - the membrane proton channel. CF(1) has five subunits: alpha(3), beta(3), gamma(1), delta(1), epsilon(1). CF(0) has three main subunits: a(1), b(2) and c(9-12). The alpha and beta chains form an alternating ring which encloses part of the gamma chain. CF(1) is attached to CF(0) by a central stalk formed by the gamma and epsilon chains, while a peripheral stalk is formed by the delta and b chains.

It localises to the cell inner membrane. It carries out the reaction ATP + H2O + 4 H(+)(in) = ADP + phosphate + 5 H(+)(out). In terms of biological role, produces ATP from ADP in the presence of a proton gradient across the membrane. The catalytic sites are hosted primarily by the beta subunits. The chain is ATP synthase subunit beta from Haemophilus ducreyi (strain 35000HP / ATCC 700724).